The following is an 815-amino-acid chain: RNA-binding protein 5 (815 aa).

The segment at Met-1 to Asp-93 is disordered. 5 positions are modified to phosphoserine: Ser-18, Ser-59, Ser-69, Ser-72, and Ser-78. In terms of domain architecture, RRM 1 spans Lys-98–Pro-178. The segment at Lys-181 to Asp-210 adopts a RanBP2-type zinc-finger fold. An RRM 2 domain is found at Asp-231–Ser-315. Residues Val-321–Ala-809 are required for interaction with U2AF2. 2 disordered regions span residues Ala-407–Ser-468 and Ala-508–Ile-540. Positions Gln-411–Pro-422 are enriched in polar residues. The segment covering Pro-426 to Thr-446 has biased composition (low complexity). Ser-444 bears the Phosphoserine mark. Residues Thr-452–Lys-535 form a sufficient for interaction with ACIN1, PRPF8, SFRS3, SNRPB, SNRPN, SNRNP70 and SNRNP200 region. Over residues Glu-510–Leu-519 the composition is skewed to polar residues. 2 positions are modified to phosphoserine: Ser-621 and Ser-624. A C2H2-type zinc finger spans residues Met-647–His-672. One can recognise a G-patch domain in the interval His-743 to Ser-789.

Belongs to the RBM5/RBM10 family. In terms of assembly, component of the spliceosome A complex (also known as the prespliceosome). Appears to dissociate from the spliceosome upon formation of the spliceosome B complex (also known as the precatalytic spliceosome), in which the heterotrimeric U4/U6.U5 snRNPs are bound. Interacts with U2AF2; this interaction is direct. Also interacts with ACIN1, PRPF8, SFRS3, SNRPB, SNRPN, SNRNP70 and SNRNP200; these interactions may be indirect.

The protein localises to the nucleus. Component of the spliceosome A complex. Binds to ssRNA containing the consensus sequence 5'-AGGUAA-3'. Regulates alternative splicing of a number of mRNAs. May modulate splice site pairing after recruitment of the U1 and U2 snRNPs to the 5' and 3' splice sites of the intron. May both positively and negatively regulate apoptosis by regulating the alternative splicing of several genes involved in this process, including FAS and CASP2/caspase-2. In the case of FAS, promotes production of a soluble form of FAS that inhibits apoptosis. In the case of CASP2/caspase-2, promotes production of a catalytically active form of CASP2/Caspase-2 that induces apoptosis. This is RNA-binding protein 5 (Rbm5) from Rattus norvegicus (Rat).